The primary structure comprises 649 residues: V-type ATP synthase subunit I (649 aa).

The next 7 helical transmembrane spans lie at 312–332 (FFSF…GLVF), 360–380 (FMIL…FFGV), 453–473 (FIDN…LSLG), 485–505 (IGWV…LQAV), 520–540 (GLVG…GGVI), 556–576 (VFSD…GAMV), and 593–613 (ILII…GGVI).

The protein belongs to the V-ATPase 116 kDa subunit family.

It is found in the cell membrane. Its function is as follows. Produces ATP from ADP in the presence of a proton gradient across the membrane. The polypeptide is V-type ATP synthase subunit I (atpI) (Chlamydia trachomatis serovar D (strain ATCC VR-885 / DSM 19411 / UW-3/Cx)).